The primary structure comprises 198 residues: Dual specificity protein phosphatase 1 (198 aa).

Positions 1–20 (MSSRDRGSPSSSSSSSSLPG) are disordered. Residues 8 to 17 (SPSSSSSSSS) show a composition bias toward low complexity. A caM binding domain 1 region spans residues 26–47 (EKVKNQIQALVRVIKVARTYRD). The Tyrosine-protein phosphatase domain maps to 50–191 (VPSLIEQGLY…LQDLEKSMQV (142 aa)). The Phosphocysteine intermediate role is filled by C135. The interval 151–180 (MKKHGMTLAQALQHVKSKRPVASPNAGFIR) is caM binding domain 2.

Belongs to the protein-tyrosine phosphatase family. Non-receptor class dual specificity subfamily. Interacts with calmodulin (CaM) in a calcium Ca(2+)-dependent manner. Expressed in roots, stems, leaves and flowers.

Its subcellular location is the nucleus. It localises to the cytoplasm. The catalysed reaction is O-phospho-L-tyrosyl-[protein] + H2O = L-tyrosyl-[protein] + phosphate. It carries out the reaction O-phospho-L-seryl-[protein] + H2O = L-seryl-[protein] + phosphate. It catalyses the reaction O-phospho-L-threonyl-[protein] + H2O = L-threonyl-[protein] + phosphate. With respect to regulation, inhibited by sodium vanadate and sodium tungstate. NaF and spermifine repress specifically phosphoserine and phosphothreonine phosphatase activity. In terms of biological role, has a dual specificity toward Ser/Thr and Tyr-containing proteins. Dephosphorylates MPK4 in vitro. The protein is Dual specificity protein phosphatase 1 (DSPTP1) of Arabidopsis thaliana (Mouse-ear cress).